Consider the following 103-residue polypeptide: Host transcription reprogramming factor 6 (103 aa).

Residues 1-19 form the signal peptide; it reads MRATTAFQVIAFLAVGAAA. A C2H2-type zinc finger spans residues 66-92; sequence YWCPNQVCAKTFATQEERDHHIANTVH. The disordered stretch occupies residues 82-103; it reads ERDHHIANTVHPTNSKRDVLLQ.

The protein localises to the secreted. It localises to the host nucleus. Functionally, probable secreted effector that translocates into the nuclei of host cells to reprogram the expression of targeted genes by binding on effector binding elements in rice. The protein is Host transcription reprogramming factor 6 of Pyricularia oryzae (strain 70-15 / ATCC MYA-4617 / FGSC 8958) (Rice blast fungus).